A 184-amino-acid polypeptide reads, in one-letter code: Protein YrdA (184 aa).

This sequence belongs to the gamma-class carbonic anhydrase family.

The sequence is that of Protein YrdA (yrdA) from Escherichia coli (strain K12).